The chain runs to 399 residues: Methylthioribose kinase (399 aa).

ATP contacts are provided by residues Asn-40, Lys-57, and 111 to 113 (EDL). Asp-229 lines the substrate pocket. ATP is bound at residue 246–248 (DAE). Residue Arg-344 coordinates substrate.

It belongs to the methylthioribose kinase family. As to quaternary structure, homodimer.

The catalysed reaction is 5-(methylsulfanyl)-D-ribose + ATP = 5-(methylsulfanyl)-alpha-D-ribose 1-phosphate + ADP + H(+). It functions in the pathway amino-acid biosynthesis; L-methionine biosynthesis via salvage pathway; S-methyl-5-thio-alpha-D-ribose 1-phosphate from S-methyl-5'-thioadenosine (hydrolase route): step 2/2. Functionally, catalyzes the phosphorylation of methylthioribose into methylthioribose-1-phosphate. This is Methylthioribose kinase from Enterobacter sp. (strain 638).